The chain runs to 1244 residues: Alpha-protein kinase 1 (1244 aa).

Residues Phe61, Gln67, Arg116, 150 to 153, Asp231, Lys233, 236 to 237, and Phe295 each bind ADP-D-glycero-beta-D-manno-heptose; these read RQAR and ST. Disordered stretches follow at residues 650 to 675, 701 to 737, 757 to 798, and 824 to 848; these read LQEPNNDNLEPSQNQPQQQMPLTPFS, VRNMGPRNTSAHSRPSYRSASWSSDSGRPKNMGTHPS, VKDR…TEDA, and NWPVQNPDSRKSGGPVAEQGIDPDA. Polar residues predominate over residues 652 to 675; it reads EPNNDNLEPSQNQPQQQMPLTPFS. The span at 713–726 shows a compositional bias: low complexity; it reads SRPSYRSASWSSDS. Positions 757–771 are enriched in basic and acidic residues; the sequence is VKDRQGKEQGEEISE. A compositionally biased stretch (acidic residues) spans 787 to 798; the sequence is PEGETAESTEDA. Residues 1017–1237 form the Alpha-type protein kinase domain; sequence KYSKKSELWT…ICHRLSLTRP (221 aa).

This sequence belongs to the protein kinase superfamily. Alpha-type protein kinase family. ALPK subfamily. As to expression, highly expressed in liver. Expressed in the optic nerve and retinal pigmented epithelium. Lower expression is observed in the macula and extramacular retina.

The protein resides in the cytoplasm. It is found in the cytosol. Its subcellular location is the cytoskeleton. It localises to the spindle pole. The protein localises to the microtubule organizing center. The protein resides in the centrosome. It is found in the cell projection. Its subcellular location is the cilium. The catalysed reaction is L-seryl-[protein] + ATP = O-phospho-L-seryl-[protein] + ADP + H(+). The enzyme catalyses L-threonyl-[protein] + ATP = O-phospho-L-threonyl-[protein] + ADP + H(+). Its activity is regulated as follows. Serine/threonine-protein kinase activity is stimulated upon ADP-D-glycero-beta-D-manno-heptose (ADP-Heptose)-binding. Functionally, serine/threonine-protein kinase that detects bacterial pathogen-associated molecular pattern metabolites (PAMPs) and initiates an innate immune response, a critical step for pathogen elimination and engagement of adaptive immunity. Specifically recognizes and binds ADP-D-glycero-beta-D-manno-heptose (ADP-Heptose), a potent PAMP present in all Gram-negative and some Gram-positive bacteria. ADP-Heptose-binding stimulates its kinase activity to phosphorylate and activate TIFA, triggering pro-inflammatory NF-kappa-B signaling. May be involved in monosodium urate monohydrate (MSU)-induced inflammation by mediating phosphorylation of unconventional myosin MYO9A. May also play a role in apical protein transport by mediating phosphorylation of unconventional myosin MYO1A. May play a role in ciliogenesis. In Homo sapiens (Human), this protein is Alpha-protein kinase 1.